The sequence spans 1153 residues: Reverse gyrase 2 (1153 aa).

An RG N-terminal-type zinc finger spans residues 1–41; the sequence is MLKVNYLFGCPNCNGSISVDRLHAGIPCETCLPGAVEKLDI. Zn(2+) contacts are provided by cysteine 10, cysteine 13, cysteine 28, and cysteine 31. Residues glutamine 86 and 103–110 contribute to the ATP site; that span reads APTGVGKT. One can recognise a Helicase ATP-binding domain in the interval 90 to 276; it reads LNKLVRGESF…ALRFLVGFEP (187 aa). Positions 184–187 match the DEAD box motif; sequence DDAD. The interval 567 to 1153 is topoisomerase I; that stretch reads MNFKTALLVV…VNPLQSEQYV (587 aa). The region spanning 571-735 is the Toprim domain; the sequence is TALLVVESPT…NIFRISYNEI (165 aa). A Mg(2+)-binding site is contributed by glutamate 577. An RG C-terminal-type zinc finger spans residues 654-681; it reads LYRCMSCGKTITKKVSTCPYCGSSMINS. 4 residues coordinate Zn(2+): cysteine 657, cysteine 660, cysteine 671, and cysteine 674. A Mg(2+)-binding site is contributed by aspartate 704. In terms of domain architecture, Topo IA-type catalytic spans 751 to 1142; that stretch reads NESLVKAQIA…DLLNEIKNIK (392 aa). Tyrosine 894 acts as the O-(5'-phospho-DNA)-tyrosine intermediate in catalysis.

The protein in the N-terminal section; belongs to the DEAD box helicase family. DDVD subfamily. This sequence in the C-terminal section; belongs to the type IA topoisomerase family. As to quaternary structure, monomer. The cofactor is Zn(2+). Requires Mg(2+) as cofactor.

The protein localises to the cytoplasm. It catalyses the reaction ATP + H2O = ADP + phosphate + H(+). Its function is as follows. Modifies the topological state of DNA by introducing positive supercoils in an ATP-dependent process, increasing the linking number in steps of +1. Binds to single-stranded DNA, transiently cleaves and then rejoins the ends, introducing a positive supercoil in the process. The scissile phosphodiester is attacked by the catalytic tyrosine of the enzyme, resulting in the formation of a DNA-(5'-phosphotyrosyl)-enzyme intermediate. Probably involved in rewinding DNA strands in regions of the chromosome that have opened up to allow replication, transcription, DNA repair and/or for DNA protection. In terms of biological role, might be a cell cycle protein. In Sulfolobus acidocaldarius (strain ATCC 33909 / DSM 639 / JCM 8929 / NBRC 15157 / NCIMB 11770), this protein is Reverse gyrase 2.